Here is a 66-residue protein sequence, read N- to C-terminus: Large ribosomal subunit protein bL35 (66 aa).

2 stretches are compositionally biased toward basic residues: residues 1–16 (MPKQ…RVKR) and 23–45 (KRGR…RQLR). Residues 1–53 (MPKQKTHRGLAKRVKRTGGGGLKRGRAFTSHRFHGKTKKQRRQLRKASMVAKG) are disordered.

This sequence belongs to the bacterial ribosomal protein bL35 family.

The protein is Large ribosomal subunit protein bL35 of Enterococcus faecalis (strain ATCC 700802 / V583).